A 170-amino-acid chain; its full sequence is Transcriptional repressor NrdR (170 aa).

A zinc finger lies at 3–34 (CPFCRHPDSRVVDSRTSEDGSSIRRRRQCPEC). The 91-residue stretch at 46 to 136 (LSVVKRSGVA…VYRGFSSLED (91 aa)) folds into the ATP-cone domain. Positions 148 to 170 (RENEGDPDADGSADAPVRLTTSV) are disordered.

It belongs to the NrdR family. Zn(2+) is required as a cofactor.

In terms of biological role, negatively regulates transcription of bacterial ribonucleotide reductase nrd genes and operons by binding to NrdR-boxes. The sequence is that of Transcriptional repressor NrdR from Beutenbergia cavernae (strain ATCC BAA-8 / DSM 12333 / CCUG 43141 / JCM 11478 / NBRC 16432 / NCIMB 13614 / HKI 0122).